We begin with the raw amino-acid sequence, 198 residues long: Putative pseudouridine methyltransferase (198 aa).

L132 and C186 together coordinate S-adenosyl-L-methionine.

The protein belongs to the methyltransferase superfamily. TrmY family.

The protein localises to the cytoplasm. The protein is Putative pseudouridine methyltransferase of Shewanella frigidimarina (strain NCIMB 400).